A 192-amino-acid chain; its full sequence is UPF0312 protein Ent638_1570 (192 aa).

The N-terminal stretch at 1-22 is a signal peptide; the sequence is MKKRLLGIALGSLLFTTGSAVA.

The protein belongs to the UPF0312 family. Type 1 subfamily.

The protein resides in the periplasm. In Enterobacter sp. (strain 638), this protein is UPF0312 protein Ent638_1570.